Reading from the N-terminus, the 447-residue chain is MHVLNILWVVFGIGLMLVLNLKFKINSMVALLVAALSVGMLAGMDLMSLLHTMKAGFGNTLGELAIIVVFGAVIGKLMVDSGAAHQIAHTLLARLGLRYVQLSVIIIGLIFGLAMFYEVAFIMLAPLVIVIAAEAKIPFLKLAIPAVAAATTAHSLFPPQPGPVALVNAYGADMGMVYIYGVLVTIPSVICAGLILPKFLGNLERPTPSFLKADQPVDMNNLPSFGVSILVPLIPAIIMISTTIANIWLVKDTPAWEVVNFIGSSPIAMFIAMVVAFVLFGTARGHDMQWVMNAFESAVKSIAMVILIIGAGGVLKQTIIDTGIGDTIGMLMSHGNISPYIMAWLITVLIRLATGQGVVSAMTAAGIISAAILDPATGQLVGVNPALLVLATAAGSNTLTHINDASFWLFKGYFDLSVKDTLKTWGLLELVNSVVGLIIVLIISMVA.

A helical membrane pass occupies residues 1–21; that stretch reads MHVLNILWVVFGIGLMLVLNL. Topologically, residues 22–28 are periplasmic; that stretch reads KFKINSM. The chain crosses the membrane as a helical span at residues 29 to 49; it reads VALLVAALSVGMLAGMDLMSL. Topologically, residues 50–54 are cytoplasmic; sequence LHTMK. Residues 55-75 form a helical membrane-spanning segment; that stretch reads AGFGNTLGELAIIVVFGAVIG. Residues 76–103 lie on the Periplasmic side of the membrane; that stretch reads KLMVDSGAAHQIAHTLLARLGLRYVQLS. Residues 104 to 124 form a helical membrane-spanning segment; it reads VIIIGLIFGLAMFYEVAFIML. At 125-126 the chain is on the cytoplasmic side; it reads AP. A helical membrane pass occupies residues 127–147; sequence LVIVIAAEAKIPFLKLAIPAV. Topologically, residues 148–175 are periplasmic; the sequence is AAATTAHSLFPPQPGPVALVNAYGADMG. A helical transmembrane segment spans residues 176–196; sequence MVYIYGVLVTIPSVICAGLIL. Over 197–224 the chain is Cytoplasmic; that stretch reads PKFLGNLERPTPSFLKADQPVDMNNLPS. A helical transmembrane segment spans residues 225 to 245; the sequence is FGVSILVPLIPAIIMISTTIA. Over 246 to 260 the chain is Periplasmic; the sequence is NIWLVKDTPAWEVVN. The chain crosses the membrane as a helical span at residues 261-281; that stretch reads FIGSSPIAMFIAMVVAFVLFG. Over 282–294 the chain is Cytoplasmic; that stretch reads TARGHDMQWVMNA. A helical transmembrane segment spans residues 295–315; the sequence is FESAVKSIAMVILIIGAGGVL. At 316–329 the chain is on the periplasmic side; it reads KQTIIDTGIGDTIG. The helical transmembrane segment at 330–350 threads the bilayer; the sequence is MLMSHGNISPYIMAWLITVLI. Position 351 (Arg351) is a topological domain, cytoplasmic. Residues 352–372 form a helical membrane-spanning segment; sequence LATGQGVVSAMTAAGIISAAI. Over 373–374 the chain is Periplasmic; sequence LD. The helical transmembrane segment at 375 to 395 threads the bilayer; that stretch reads PATGQLVGVNPALLVLATAAG. The Cytoplasmic segment spans residues 396-426; that stretch reads SNTLTHINDASFWLFKGYFDLSVKDTLKTWG. Residues 427–447 traverse the membrane as a helical segment; it reads LLELVNSVVGLIIVLIISMVA.

It belongs to the GntP permease family.

It localises to the cell inner membrane. It functions in the pathway carbohydrate acid metabolism; D-gluconate degradation. High-affinity gluconate transporter with fairly broad specificity, including low affinity for glucuronate, several disaccharides, and some hexoses, but not glucose. The sequence is that of High-affinity gluconate transporter (gntP) from Escherichia coli (strain K12).